A 597-amino-acid chain; its full sequence is Aspartate--tRNA(Asp/Asn) ligase (597 aa).

Residue E178 participates in L-aspartate binding. Residues 202-205 (QLFK) are aspartate. An L-aspartate-binding site is contributed by R224. ATP-binding positions include 224–226 (RDE) and Q233. L-aspartate is bound at residue H458. E488 is an ATP binding site. Residue R495 participates in L-aspartate binding. Residue 540 to 543 (GLDR) participates in ATP binding.

Belongs to the class-II aminoacyl-tRNA synthetase family. Type 1 subfamily. In terms of assembly, homodimer.

The protein resides in the cytoplasm. The catalysed reaction is tRNA(Asx) + L-aspartate + ATP = L-aspartyl-tRNA(Asx) + AMP + diphosphate. In terms of biological role, aspartyl-tRNA synthetase with relaxed tRNA specificity since it is able to aspartylate not only its cognate tRNA(Asp) but also tRNA(Asn). Reaction proceeds in two steps: L-aspartate is first activated by ATP to form Asp-AMP and then transferred to the acceptor end of tRNA(Asp/Asn). This is Aspartate--tRNA(Asp/Asn) ligase from Cyanothece sp. (strain PCC 7425 / ATCC 29141).